The primary structure comprises 258 residues: Chymotrypsin-like elastase family member 1 (258 aa).

The N-terminal stretch at 1 to 8 (MLVLYGHS) is a signal peptide. Residues 9 to 18 (TQDVPETNAR) constitute a propeptide, activation peptide. The region spanning 19–256 (VVGGTEARRN…YITWINNVIA (238 aa)) is the Peptidase S1 domain. The cysteines at positions 48 and 64 are disulfide-linked. His63 (charge relay system) is an active-site residue. Residues Glu77, Asn79, Gln82, and Glu87 each contribute to the Ca(2+) site. Asn79 carries an N-linked (GlcNAc...) asparagine glycan. Catalysis depends on Asp111, which acts as the Charge relay system. Disulfide bonds link Cys145-Cys212, Cys176-Cys192, and Cys202-Cys232. The Charge relay system role is filled by Ser206. N-linked (GlcNAc...) asparagine glycosylation occurs at Asn233.

It belongs to the peptidase S1 family. Elastase subfamily. Ca(2+) serves as cofactor.

It localises to the secreted. It catalyses the reaction Hydrolysis of proteins, including elastin. Preferential cleavage: Ala-|-Xaa.. In terms of biological role, serine proteases that hydrolyze many proteins in addition to elastin. In Canis lupus familiaris (Dog), this protein is Chymotrypsin-like elastase family member 1 (CELA1).